A 338-amino-acid polypeptide reads, in one-letter code: Dihydroorotate dehydrogenase (quinone) (338 aa).

FMN is bound by residues A68–K72 and T92. Residue K72 coordinates substrate. N117 to F121 lines the substrate pocket. Residues S147 and N180 each coordinate FMN. N180 is a substrate binding site. Catalysis depends on S183, which acts as the Nucleophile. N185 provides a ligand contact to substrate. Residues K214 and T242 each coordinate FMN. N243–T244 is a substrate binding site. Residues G267, G296, and Y317–T318 contribute to the FMN site.

Belongs to the dihydroorotate dehydrogenase family. Type 2 subfamily. Monomer. The cofactor is FMN.

The protein resides in the cell membrane. It carries out the reaction (S)-dihydroorotate + a quinone = orotate + a quinol. The protein operates within pyrimidine metabolism; UMP biosynthesis via de novo pathway; orotate from (S)-dihydroorotate (quinone route): step 1/1. Functionally, catalyzes the conversion of dihydroorotate to orotate with quinone as electron acceptor. This Salinispora arenicola (strain CNS-205) protein is Dihydroorotate dehydrogenase (quinone).